The following is a 386-amino-acid chain: Latent membrane protein 1 (386 aa).

At 2 to 23 (DLDLERGPPGPRRPPRGPPLSS) the chain is on the cytoplasmic side. Residues 24-44 (SIGLALLLLLLALLFWLYIIM) traverse the membrane as a helical segment. Residues 45-51 (SNWTGGA) are Extracellular-facing. A helical transmembrane segment spans residues 52–72 (LLVLYAFALMLVIIILIIFIF). Residues 73–75 (RRD) are Cytoplasmic-facing. A helical membrane pass occupies residues 76 to 96 (LLCPLGALCLLLLMITLLLIA). Residues 97 to 106 (LWNLHGQALY) are Extracellular-facing. Residues 107–127 (LGIVLFIFGCLLVLGLWIYLL) traverse the membrane as a helical segment. Residues 128 to 139 (EILWRLGATIWQ) are Cytoplasmic-facing. The helical transmembrane segment at 140–160 (LLAFFLAFFLDIILLIIALYL) threads the bilayer. Topologically, residues 161-163 (QQN) are extracellular. The helical transmembrane segment at 164-184 (WWTLLVDLLWLLLFLAILIWM) threads the bilayer. Over 185 to 386 (YYHGQRHSDE…HGPVQLSYYD (202 aa)) the chain is Cytoplasmic. The tract at residues 194–232 (EHHHDDSLPHPQQATDDSSNQSDSNSNEGRHLLLVSGAG) is CTAR1. The disordered stretch occupies residues 194 to 386 (EHHHDDSLPH…HGPVQLSYYD (193 aa)). Composition is skewed to low complexity over residues 209–220 (DDSSNQSDSNSN) and 251–267 (NGPQ…PQDP). Positions 342 to 386 (GGGGHSHDSGHDGIDPHLPTLLLGTSGSGGDDDDPHGPVQLSYYD) are CTAR2. The span at 346-356 (HSHDSGHDGID) shows a compositional bias: basic and acidic residues. The segment covering 357–366 (PHLPTLLLGT) has biased composition (low complexity).

This sequence belongs to the herpesviridae LMP-1 family. In terms of assembly, interacts (via PXQXT motif) with host tumor necrosis factor receptor-associated factor (TRAF) proteins TRAF1, TRAF2, TRAF3 and TRAF5. Interacts with TRAF3; this interaction activates B lymphocytes. Interacts with human protein ZMYND11; leading to negatively regulate NF-kappa-B activation. Interacts with host UBE2I; this interaction induces the sumoylation of various cellular proteins. Interacts with host IRF7. Interacts with host TYK2. In terms of processing, ubiquitinated on the N-terminus.

Its subcellular location is the host cell membrane. Acts as a CD40 functional homolog to prevent apoptosis of infected B-lymphocytes and drive their proliferation. Functions as a constitutively active tumor necrosis factor receptor that induces the activation of several signaling pathways, including those of the NF-kappa-B family. LMP1 signaling leads to up-regulation of antiapoptotic proteins and provide growth signals in latently infected cells. Interacts with host UBE2I and subsequently affects the sumoylation state of several cellular proteins. For example, induces the sumoylation of host IRF7 thereby limiting its transcriptional activity and modulating the activation of innate immune responses. Also inhibits host IFN-alpha-stimulated STAT2 nuclear translocation and interferon-stimulated response element transcriptional activity by interacting with and inhibiting host TYK2. Induces SUMO expression during viral latency thereby dysregulating the host sumoylation processes. The polypeptide is Latent membrane protein 1 (LMP1) (Homo sapiens (Human)).